A 1099-amino-acid chain; its full sequence is Mediator of RNA polymerase II transcription subunit 5 (1099 aa).

Positions aspartate 41 to proline 66 are disordered.

This sequence belongs to the Mediator complex subunit 5 family. Component of the Mediator complex.

It is found in the nucleus. Functionally, component of the Mediator complex, a coactivator involved in the regulated transcription of nearly all RNA polymerase II-dependent genes. Mediator functions as a bridge to convey information from gene-specific regulatory proteins to the basal RNA polymerase II transcription machinery. Mediator is recruited to promoters by direct interactions with regulatory proteins and serves as a scaffold for the assembly of a functional preinitiation complex with RNA polymerase II and the general transcription factors. This is Mediator of RNA polymerase II transcription subunit 5 (NUT1) from Candida glabrata (strain ATCC 2001 / BCRC 20586 / JCM 3761 / NBRC 0622 / NRRL Y-65 / CBS 138) (Yeast).